Consider the following 348-residue polypeptide: Glycerol-1-phosphate dehydrogenase [NAD(P)+] (348 aa).

NAD(+)-binding positions include 94-98 and 116-119; these read GKPID and TAAS. D121 lines the substrate pocket. Position 125 (S125) interacts with NAD(+). D168 lines the substrate pocket. Zn(2+) contacts are provided by D168 and H248. Substrate is bound at residue H252. H264 is a binding site for Zn(2+).

The protein belongs to the glycerol-1-phosphate dehydrogenase family. It depends on Zn(2+) as a cofactor.

Its subcellular location is the cytoplasm. It carries out the reaction sn-glycerol 1-phosphate + NAD(+) = dihydroxyacetone phosphate + NADH + H(+). The enzyme catalyses sn-glycerol 1-phosphate + NADP(+) = dihydroxyacetone phosphate + NADPH + H(+). It participates in membrane lipid metabolism; glycerophospholipid metabolism. Catalyzes the NAD(P)H-dependent reduction of dihydroxyacetonephosphate (DHAP or glycerone phosphate) to glycerol 1-phosphate (G1P). The G1P thus generated is used as the glycerophosphate backbone of phospholipids in the cellular membranes of Archaea. The polypeptide is Glycerol-1-phosphate dehydrogenase [NAD(P)+] (Haloquadratum walsbyi (strain DSM 16790 / HBSQ001)).